We begin with the raw amino-acid sequence, 180 residues long: UPF0340 protein LACR_0494 (180 aa).

This sequence belongs to the UPF0340 family.

The polypeptide is UPF0340 protein LACR_0494 (Lactococcus lactis subsp. cremoris (strain SK11)).